The sequence spans 258 residues: Terpene cyclase macJ (258 aa).

7 helical membrane-spanning segments follow: residues 29–49 (VPDG…ILMA), 58–78 (YAMP…YGFV), 83–103 (LLNQ…FYAI), 124–144 (IIVV…ATFI), 151–171 (VVFM…IAQL), 181–201 (SWGI…CFFW), and 220–240 (FLLL…VYVQ).

The protein belongs to the paxB family.

It localises to the membrane. It participates in secondary metabolite biosynthesis; terpenoid biosynthesis. Its function is as follows. Terpene cyclase; part of the gene cluster that mediates the biosynthesis of macrophorins, isoprenoid epoxycyclohexenones containing cyclized drimane moieties. The first step of the pathway is the synthesis of 6-methylsalicylic acid (6-MSA) by the polyketide synthase macA. 6-MSA is then converted to m-cresol by the decarboxylase macB. The cytochrome P450 monooxygenase macC then catalyzes the oxidation of m-cresol to toluquinol. Epoxidation of toluquinol is then performed by the short chain dehydrogenase macD, with the help of macE, and a further prenylation by macG leads to 7-deacetoxyyanuthone A. The next step is the hydroxylation of C-22 of 7-deacetoxyyanuthone A by the cytochrome P450 monooxygenase macH to yield 22-deacetylyanuthone A. O-Mevalon transferase macI then attaches mevalon to the hydroxyl group of 22-deacetylyanuthone A to produce yanuthone E. The terpene cyclase macJ catalyzes the cyclization of 22-deacetylyanuthone A to macrophorin A. MacJ is also able to catalyze cyclization of yanuthone E and 7-deacetoxyyanuthone A to their corresponding macrophorins. The macJ products can be further modified by macH and macJ, as well as by the FAD-dependent monooxygenase macF, to produce additional macrophorins, including 4'-oxomacrophorin A, 4'-oxomacrophorin D and 4'-oxomacrophorin E. The protein is Terpene cyclase macJ of Penicillium terrestre.